The following is a 442-amino-acid chain: Histidinol dehydrogenase (442 aa).

Positions 136, 197, and 220 each coordinate NAD(+). Substrate contacts are provided by Ser243, Gln265, and His268. 2 residues coordinate Zn(2+): Gln265 and His268. Active-site proton acceptor residues include Glu333 and His334. 4 residues coordinate substrate: His334, Asp367, Glu421, and His426. Asp367 is a Zn(2+) binding site. Residue His426 coordinates Zn(2+).

It belongs to the histidinol dehydrogenase family. Requires Zn(2+) as cofactor.

The catalysed reaction is L-histidinol + 2 NAD(+) + H2O = L-histidine + 2 NADH + 3 H(+). It participates in amino-acid biosynthesis; L-histidine biosynthesis; L-histidine from 5-phospho-alpha-D-ribose 1-diphosphate: step 9/9. Catalyzes the sequential NAD-dependent oxidations of L-histidinol to L-histidinaldehyde and then to L-histidine. The chain is Histidinol dehydrogenase from Pseudomonas fluorescens (strain ATCC BAA-477 / NRRL B-23932 / Pf-5).